We begin with the raw amino-acid sequence, 199 residues long: MGFLVAVMNFSPTLVHHHMKSKPQCQNEKLRQGQTSSLFDRRGFLKCVVGASSFMATIEFSGLQAQASEEKLDEGEGVVGAFKTLFDPNERTKSGKELPKAYLKSAREVVKTMRESLKENPKDNAKFRRSADAAKESIRDYLSNWRGQKTVAGEESYVELENVIRALAKFYSKAGPSAPLPDEVKTEILDDLNKAEEFL.

It belongs to the Psb27 family. Interacts with the C-terminus of both the precursor and mature form of D1.

Its subcellular location is the plastid. The protein localises to the chloroplast thylakoid lumen. Functionally, required, but not essential, for D1 (psbA) precursor processing and thus correct photosystem II assembly (PSII). The sequence is that of Photosystem II D1 precursor processing protein PSB27-H2, chloroplastic (PSB27-2) from Arabidopsis thaliana (Mouse-ear cress).